The following is a 62-amino-acid chain: Large ribosomal subunit protein uL30 (62 aa).

It belongs to the universal ribosomal protein uL30 family. As to quaternary structure, part of the 50S ribosomal subunit.

The protein is Large ribosomal subunit protein uL30 of Hydrogenovibrio crunogenus (strain DSM 25203 / XCL-2) (Thiomicrospira crunogena).